A 132-amino-acid chain; its full sequence is UPF0299 membrane protein YohJ (132 aa).

4 helical membrane passes run 5 to 25 (LNII…LYAG), 26 to 46 (IFIA…MLIL), 63 to 83 (GCYV…VGVM), and 93 to 113 (FGPV…VVSW).

It belongs to the UPF0299 family.

Its subcellular location is the cell inner membrane. This chain is UPF0299 membrane protein YohJ, found in Shigella flexneri serotype 5b (strain 8401).